Here is an 81-residue protein sequence, read N- to C-terminus: Probable antimicrobial peptide Con13 (81 aa).

An N-terminal signal peptide occupies residues 1-22 (MNRKLLLVFLVVAMLVMQPAEA). The propeptide occupies 66–81 (EAGQIPFDEFMDVLYS).

It belongs to the non-disulfide-bridged peptide (NDBP) superfamily. Long chain multifunctional peptide (group 2) family. As to expression, expressed by the venom gland.

It localises to the secreted. The protein localises to the target cell membrane. In terms of biological role, at high concentrations, acts as a pore former in cellular membranes and causes the leakage of the cells. At submicromolar concentrations, degranulates granulocytes and has a weak hemolytic activity against human erythrocytes. Also strongly inhibits the production of superoxide anions. Has a strong antibacterial activity against Gram-negative bacteria but is less active against Gram-positive bacteria. Also has antifungal activity. This is Probable antimicrobial peptide Con13 from Opisthacanthus cayaporum (South American scorpion).